We begin with the raw amino-acid sequence, 394 residues long: Protein NDRG1 (394 aa).

N-acetylserine is present on S2. Phosphoserine is present on residues S2, S319, and S326. Positions 325–394 (RSRTASGSSV…AGPKSMEVSC (70 aa)) are disordered. A compositionally biased stretch (polar residues) spans 327–339 (RTASGSSVTSLDG). T328 carries the phosphothreonine; by SGK1 modification. S330 and S332 each carry phosphoserine; by SGK1. S333 carries the phosphoserine modification. Residue T335 is modified to Phosphothreonine. Residue S336 is modified to Phosphoserine. 3 tandem repeats follow at residues 339 to 348 (GTRSRSHTSE), 349 to 358 (GTRSRSHTSE), and 359 to 368 (GTRSRSHTSE). Residues 339-368 (GTRSRSHTSEGTRSRSHTSEGTRSRSHTSE) form a 3 X 10 AA tandem repeats of G-T-R-S-R-S-H-T-S-E region. At T340 the chain carries Phosphothreonine. At S342 the chain carries Phosphoserine. Over residues 345 to 371 (HTSEGTRSRSHTSEGTRSRSHTSEGAH) the composition is skewed to basic and acidic residues. T346 bears the Phosphothreonine; by SGK1 mark. S352 is subject to Phosphoserine. Phosphothreonine; by SGK1 is present on T356. S362 carries the phosphoserine modification. The residue at position 364 (S364) is a Phosphoserine; by SGK1. T366 bears the Phosphothreonine; by SGK1 mark. T375 is subject to Phosphothreonine.

It belongs to the NDRG family. Interacts with RAB4A (membrane-bound form); the interaction involves NDRG1 in vesicular recycling of CDH1. Under stress conditions, phosphorylated in the C-terminal on many serine and threonine residues. Phosphorylated in vitro by PKA. Phosphorylation enhanced by increased intracellular cAMP levels. Homocysteine induces dephosphorylation. Phosphorylation by SGK1 is cell cycle dependent. Ubiquitous; expressed most prominently in placental membranes and prostate, kidney, small intestine, and ovary tissues. Also expressed in heart, brain, skeletal muscle, lung, liver and pancreas. Low levels in peripheral blood leukocytes and in tissues of the immune system. Expressed mainly in epithelial cells. Also found in Schwann cells of peripheral neurons. Reduced expression in adenocarcinomas compared to normal tissues. In colon, prostate and placental membranes, the cells that border the lumen show the highest expression.

The protein localises to the cytoplasm. Its subcellular location is the cytosol. The protein resides in the cytoskeleton. It is found in the microtubule organizing center. It localises to the centrosome. The protein localises to the nucleus. Its subcellular location is the cell membrane. Stress-responsive protein involved in hormone responses, cell growth, and differentiation. Acts as a tumor suppressor in many cell types. Necessary but not sufficient for p53/TP53-mediated caspase activation and apoptosis. Has a role in cell trafficking, notably of the Schwann cell, and is necessary for the maintenance and development of the peripheral nerve myelin sheath. Required for vesicular recycling of CDH1 and TF. May also function in lipid trafficking. Protects cells from spindle disruption damage. Functions in p53/TP53-dependent mitotic spindle checkpoint. Regulates microtubule dynamics and maintains euploidy. In Homo sapiens (Human), this protein is Protein NDRG1 (NDRG1).